Here is a 148-residue protein sequence, read N- to C-terminus: General odorant-binding protein 69a (148 aa).

The first 23 residues, 1 to 23 (MVARHFSFFLALLILYDLIPSNQ), serve as a signal peptide directing secretion. Intrachain disulfides connect cysteine 42-cysteine 74, cysteine 70-cysteine 121, and cysteine 112-cysteine 130.

Belongs to the PBP/GOBP family. As to expression, expressed in the antenna, mostly on the anterior surface of the third antennal segment. Expressed in auxiliary cells and the third antennal segment and exported to the sensillar lymph (at protein level).

The protein resides in the secreted. In terms of biological role, odorant-binding protein required for olfactory behavior and activity of pheromone-sensitive neurons in response to the male-specific pheromone cis-vaccenyl acetate (cVA). Modulates social responsivity differently in males and females, regulating male aggression and female receptivity respectively. This Drosophila melanogaster (Fruit fly) protein is General odorant-binding protein 69a (Obp69a).